We begin with the raw amino-acid sequence, 822 residues long: Adhesion G protein-coupled receptor E2 (822 aa).

An N-terminal signal peptide occupies residues 1 to 18 (MGGRVFLAFCVWLTLLGA). Residues 19–530 (ETQDSRDCAR…DVQEEDPVLT (512 aa)) lie on the Extracellular side of the membrane. Positions 22–63 (DSRDCARWCPENSSCVNATACRCNPGFSSSSEIFTSPTEICD) constitute an EGF-like 1 domain. Intrachain disulfides connect Cys-26-Cys-36, Cys-30-Cys-42, Cys-44-Cys-62, Cys-68-Cys-82, and Cys-76-Cys-91. Residues Asn-33 and Asn-38 are each glycosylated (N-linked (GlcNAc...) asparagine). The EGF-like 1; calcium-binding domain maps to 64–103 (DINECVPPSKVSCGKSSDCRNTEGSYDCVCNPGYELVSGA). A glycan (N-linked (GlcNAc...) asparagine) is linked at Asn-108. Residues 116–159 (DVDECQQNPRLCKSYGTCVNTLGSFTCQCLPGFKFKPEDPKLCT) enclose the EGF-like 2; calcium-binding domain. 5 disulfides stabilise this stretch: Cys-120/Cys-133, Cys-127/Cys-142, Cys-144/Cys-158, Cys-164/Cys-177, and Cys-171/Cys-186. Positions 160-198 (DVNECTSGQNPCHSSTHCLNNVGSYQCRCRPGWQPIPGS) constitute an EGF-like 3; calcium-binding domain. N-linked (GlcNAc...) asparagine glycosylation is found at Asn-203, Asn-222, Asn-351, Asn-371, Asn-427, Asn-449, and Asn-453. Residues 209–247 (DVDECSSGLHQCDNSTVCFNTVGSYTCRCRPGWEPKHGI) enclose the EGF-like 4; calcium-binding domain. 2 disulfides stabilise this stretch: Cys-213–Cys-226 and Cys-220–Cys-235. In terms of domain architecture, GAIN-B spans 351-523 (NFSYPAGTEF…AVLMAPYDVQ (173 aa)). Disulfide bonds link Cys-475–Cys-505 and Cys-493–Cys-507. The segment at 475–523 (CVFWEHGQNGCGHWATTGCSTMDTRDTSTICRCTHLSSFAVLMAPYDVQ) is GPS. Residues 531–551 (VITYMGLSLSLLCLLLAALTF) traverse the membrane as a helical segment. Topologically, residues 552–562 (LLCKAIQNIST) are cytoplasmic. Residues 563–583 (SLHLQLSLCLLLAHLLFLVAI) form a helical membrane-spanning segment. Over 584-589 (DRTEHE) the chain is Extracellular. The helical transmembrane segment at 590–610 (VLCAIIASALHYLYLAAFTWM) threads the bilayer. Residues 611-637 (LLEALYLFLTARNLMVVNYSSINRFTK) lie on the Cytoplasmic side of the membrane. The chain crosses the membrane as a helical span at residues 638–658 (KLMFPVAYGVPAVTVAISAAS). Residues 659–676 (RPHLYGTPSRCWLQPEKG) are Extracellular-facing. The chain crosses the membrane as a helical span at residues 677-697 (FIWGFLGPVCAIFSVNLALLL). Topologically, residues 698-728 (VTLWILKNRLSSLNNEVSTLQNTRMLAFKAT) are cytoplasmic. A helical membrane pass occupies residues 729–749 (AQLFILGCTWCLGILQVGPAA). Topologically, residues 750–753 (RVMA) are extracellular. A helical transmembrane segment spans residues 754–774 (YLFTIINSLQGVFIFLVYCLL). The Cytoplasmic portion of the chain corresponds to 775 to 822 (SQQVREQYRKWSKGFRKLRTESEMHTLSSSAKRDTPKPSTPGLLGLQS). A disordered region spans residues 797 to 822 (EMHTLSSSAKRDTPKPSTPGLLGLQS).

The protein belongs to the G-protein coupled receptor 2 family. Adhesion G-protein coupled receptor (ADGR) subfamily. In terms of assembly, forms a heterodimer, consisting of a large extracellular region non-covalently linked to a seven-transmembrane moiety. Interacts with chondroitin sulfate; the interaction with chondroitin sulfate is calcium-dependent. Interacts with CD55. Post-translationally, autoproteolytically cleaved into 2 subunits, an extracellular alpha subunit and a seven-transmembrane beta subunit.

It localises to the cell membrane. Its subcellular location is the cell projection. The protein resides in the ruffle membrane. Cell surface receptor that binds to the chondroitin sulfate moiety of glycosaminoglycan chains and promotes cell attachment. Promotes granulocyte chemotaxis, degranulation and adhesion. In macrophages, promotes the release of inflammatory cytokines, including IL8 and TNF. Signals probably through G-proteins. The protein is Adhesion G protein-coupled receptor E2 (ADGRE2) of Macaca mulatta (Rhesus macaque).